Here is a 650-residue protein sequence, read N- to C-terminus: DNA gyrase subunit B (650 aa).

The segment covering 400 to 414 (RRSQEARELTRRKSP) has biased composition (basic and acidic residues). Positions 400 to 422 (RRSQEARELTRRKSPFDSGSLPG) are disordered. Residues 435–549 (SELYIVEGDS…QGNIFIAQPP (115 aa)) enclose the Toprim domain. Residues glutamate 441, aspartate 514, and aspartate 516 each contribute to the Mg(2+) site.

Belongs to the type II topoisomerase GyrB family. In terms of assembly, heterotetramer, composed of two GyrA and two GyrB chains. In the heterotetramer, GyrA contains the active site tyrosine that forms a transient covalent intermediate with DNA, while GyrB binds cofactors and catalyzes ATP hydrolysis. It depends on Mg(2+) as a cofactor. The cofactor is Mn(2+). Requires Ca(2+) as cofactor.

Its subcellular location is the cytoplasm. The catalysed reaction is ATP-dependent breakage, passage and rejoining of double-stranded DNA.. Its function is as follows. A type II topoisomerase that negatively supercoils closed circular double-stranded (ds) DNA in an ATP-dependent manner to modulate DNA topology and maintain chromosomes in an underwound state. Negative supercoiling favors strand separation, and DNA replication, transcription, recombination and repair, all of which involve strand separation. Also able to catalyze the interconversion of other topological isomers of dsDNA rings, including catenanes and knotted rings. Type II topoisomerases break and join 2 DNA strands simultaneously in an ATP-dependent manner. This is DNA gyrase subunit B from Mycoplasma genitalium (strain ATCC 33530 / DSM 19775 / NCTC 10195 / G37) (Mycoplasmoides genitalium).